Here is a 91-residue protein sequence, read N- to C-terminus: Small ribosomal subunit protein uS19 (91 aa).

This sequence belongs to the universal ribosomal protein uS19 family.

In terms of biological role, protein S19 forms a complex with S13 that binds strongly to the 16S ribosomal RNA. The polypeptide is Small ribosomal subunit protein uS19 (Verminephrobacter eiseniae (strain EF01-2)).